A 228-amino-acid chain; its full sequence is Ribonuclease 3 (228 aa).

The RNase III domain occupies 7–132; the sequence is LSAFMDRLGH…VIAAVYLDAG (126 aa). Glu45 is a Mg(2+) binding site. The active site involves Asp49. Positions 118 and 121 each coordinate Mg(2+). Residue Glu121 is part of the active site. A DRBM domain is found at 157–226; it reads DPKTALQEWA…AKALLERLER (70 aa).

Belongs to the ribonuclease III family. Homodimer. Mg(2+) is required as a cofactor.

It is found in the cytoplasm. It catalyses the reaction Endonucleolytic cleavage to 5'-phosphomonoester.. In terms of biological role, digests double-stranded RNA. Involved in the processing of ribosomal RNA precursors and of some mRNAs. Complements an E.coli disruption mutant, but the E.coli enzyme does not cleave R.capsulatus rRNA precursor, showing substrate recognition is different. Probably also processes some mRNAs, and tRNAs when they are encoded in the rRNA operon. Probably processes pre-crRNA and tracrRNA of type II CRISPR loci if present in the organism. The sequence is that of Ribonuclease 3 (rnc) from Rhodobacter capsulatus (Rhodopseudomonas capsulata).